The chain runs to 387 residues: Probable inactive shikimate kinase like 2, chloroplastic (387 aa).

The N-terminal 71 residues, 1-71 (MAAFASGLAI…FNSFSCNCLS (71 aa)), are a transit peptide targeting the chloroplast. The tract at residues 368 to 387 (NIKPPGWDPSSDTGPHPQFT) is disordered.

It belongs to the shikimate kinase family.

Its subcellular location is the plastid. It localises to the chloroplast. The chain is Probable inactive shikimate kinase like 2, chloroplastic (SKL2) from Arabidopsis thaliana (Mouse-ear cress).